The following is a 388-amino-acid chain: Succinate--CoA ligase [ADP-forming] subunit beta (388 aa).

Positions 9 to 244 (KEILRKFGVA…LDEEDPAEIE (236 aa)) constitute an ATP-grasp domain. Residues Lys-46, 53–55 (GRG), Glu-99, Ala-102, and Glu-107 each bind ATP. Asn-199 and Asp-213 together coordinate Mg(2+). Residues Asn-264 and 321-323 (GIM) each bind substrate.

Belongs to the succinate/malate CoA ligase beta subunit family. Heterotetramer of two alpha and two beta subunits. The cofactor is Mg(2+).

It catalyses the reaction succinate + ATP + CoA = succinyl-CoA + ADP + phosphate. It carries out the reaction GTP + succinate + CoA = succinyl-CoA + GDP + phosphate. Its pathway is carbohydrate metabolism; tricarboxylic acid cycle; succinate from succinyl-CoA (ligase route): step 1/1. Succinyl-CoA synthetase functions in the citric acid cycle (TCA), coupling the hydrolysis of succinyl-CoA to the synthesis of either ATP or GTP and thus represents the only step of substrate-level phosphorylation in the TCA. The beta subunit provides nucleotide specificity of the enzyme and binds the substrate succinate, while the binding sites for coenzyme A and phosphate are found in the alpha subunit. The protein is Succinate--CoA ligase [ADP-forming] subunit beta of Burkholderia mallei (strain NCTC 10247).